The sequence spans 282 residues: Bifunctional protein FolD (282 aa).

NADP(+) contacts are provided by residues 164–166 (GRS) and S189.

Belongs to the tetrahydrofolate dehydrogenase/cyclohydrolase family. As to quaternary structure, homodimer.

The catalysed reaction is (6R)-5,10-methylene-5,6,7,8-tetrahydrofolate + NADP(+) = (6R)-5,10-methenyltetrahydrofolate + NADPH. The enzyme catalyses (6R)-5,10-methenyltetrahydrofolate + H2O = (6R)-10-formyltetrahydrofolate + H(+). It functions in the pathway one-carbon metabolism; tetrahydrofolate interconversion. Functionally, catalyzes the oxidation of 5,10-methylenetetrahydrofolate to 5,10-methenyltetrahydrofolate and then the hydrolysis of 5,10-methenyltetrahydrofolate to 10-formyltetrahydrofolate. The polypeptide is Bifunctional protein FolD (Lachnoclostridium phytofermentans (strain ATCC 700394 / DSM 18823 / ISDg) (Clostridium phytofermentans)).